The sequence spans 3169 residues: FRAS1-related extracellular matrix protein 2 (3169 aa).

The interval 1 to 24 (MHSAGTPGLSSRRTGNSTSFQPGP) is disordered. The first 46 residues, 1 to 46 (MHSAGTPGLSSRRTGNSTSFQPGPPPPPRLLLLLLLLLSLVSRVPA), serve as a signal peptide directing secretion. Over residues 8–21 (GLSSRRTGNSTSFQ) the composition is skewed to polar residues. The Extracellular segment spans residues 47–3113 (QPAAFGRALL…SPSSAVSLVT (3067 aa)). CSPG repeat units follow at residues 319-413 (KPSF…LELE), 438-537 (APVV…LRMV), 560-675 (PPVL…FRVQ), 700-807 (PPEL…FQVE), 828-919 (QPPE…LEVS), 945-1037 (HPTG…LSLS), 1066-1168 (APEI…FRCS), 1189-1282 (EQPE…IKLT), 1303-1399 (TPRM…FDVT), 1420-1512 (VFPD…FQVT), 1532-1621 (KKPV…FTVT), and 1655-1752 (VPQI…FAVE). An N-linked (GlcNAc...) asparagine glycan is attached at asparagine 358. N-linked (GlcNAc...) asparagine glycans are attached at residues asparagine 1244 and asparagine 1369. Residues asparagine 1584 and asparagine 1741 are each glycosylated (N-linked (GlcNAc...) asparagine). Calx-beta domains are found at residues 1759 to 1858 (LTYQ…VVLS), 1871 to 1982 (ATVE…VLLS), 1997 to 2103 (QVTI…LVLR), 2118 to 2220 (VSIN…LVLG), and 2238 to 2342 (TLIR…VHLK). The tract at residues 3036–3057 (SLVSQGKPQSTTKSRKKREIRS) is disordered. A compositionally biased stretch (polar residues) spans 3037–3047 (LVSQGKPQSTT). The chain crosses the membrane as a helical span at residues 3114–3134 (VVGGTTVGLLTICLTVIAVLM). The Cytoplasmic segment spans residues 3135–3169 (CRGKESFRGKDAPKGSSSSEPMVPPQSHHNDSSEV). The segment at 3141 to 3169 (FRGKDAPKGSSSSEPMVPPQSHHNDSSEV) is disordered.

The protein belongs to the FRAS1 family. Interacts with FREM1.

Its subcellular location is the cell membrane. Its function is as follows. Extracellular matrix protein required for maintenance of the integrity of the skin epithelium and for maintenance of renal epithelia. Required for epidermal adhesion. Involved in the development of eyelids and the anterior segment of the eyeballs. This chain is FRAS1-related extracellular matrix protein 2 (FREM2), found in Homo sapiens (Human).